A 565-amino-acid chain; its full sequence is Thiol:disulfide interchange protein DsbD (565 aa).

A signal peptide spans 1–19; it reads MAQRIFTLILLLCSTSVFA. Intrachain disulfides connect Cys-122/Cys-128 and Cys-182/Cys-304. The next 7 membrane-spanning stretches (helical) occupy residues 163-183, 208-228, 243-263, 289-309, 323-343, 357-377, and 384-404; these read LPFSALWALLIGIGIAFTPCV, LLTFIYVQGMALTYTALGLVV, YVLIGLAIVFTLLAMSMFGLF, GVFIMGAIAGLICSPCTTAPL, WLGGGTLYLYALGMGLPLMLI, WMEQVKTAFGFVILALPVFLL, and IWGLRLWSALGVAFFGWAFIT. In terms of domain architecture, Thioredoxin spans 434-565; sequence WAFGETHTAQ…FSAHLRDRQP (132 aa). Cys-480 and Cys-483 are disulfide-bonded.

This sequence belongs to the thioredoxin family. DsbD subfamily.

The protein resides in the cell inner membrane. The catalysed reaction is [protein]-dithiol + NAD(+) = [protein]-disulfide + NADH + H(+). It catalyses the reaction [protein]-dithiol + NADP(+) = [protein]-disulfide + NADPH + H(+). In terms of biological role, required to facilitate the formation of correct disulfide bonds in some periplasmic proteins and for the assembly of the periplasmic c-type cytochromes. Acts by transferring electrons from cytoplasmic thioredoxin to the periplasm. This transfer involves a cascade of disulfide bond formation and reduction steps. This is Thiol:disulfide interchange protein DsbD from Escherichia coli O6:K15:H31 (strain 536 / UPEC).